The primary structure comprises 117 residues: Large ribosomal subunit protein bL19 (117 aa).

It belongs to the bacterial ribosomal protein bL19 family.

This protein is located at the 30S-50S ribosomal subunit interface and may play a role in the structure and function of the aminoacyl-tRNA binding site. This Vesicomyosocius okutanii subsp. Calyptogena okutanii (strain HA) protein is Large ribosomal subunit protein bL19.